A 417-amino-acid chain; its full sequence is Inactive GDSL esterase/lipase-like protein 25 (417 aa).

An N-terminal signal peptide occupies residues 1-50; that stretch reads MLLIPSFTANSNEPPPSKLSLSDLSMAILKSHFFLLFPLLLLHFHTVSFA. Asn160, Asn308, and Asn311 each carry an N-linked (GlcNAc...) asparagine glycan. His331 is an active-site residue.

It belongs to the 'GDSL' lipolytic enzyme family. Interacts with the PYK10 complex and TGG2, but not with TGG1 or PEN2. Expressed throughout the seedling, rosette leaves, roots, inflorescence and imbibed seed, but not in pollen.

The protein localises to the vacuole. The protein resides in the endoplasmic reticulum. In terms of biological role, involved in organization of the endomembrane system and is required for endoplasmic reticulum morphology and organelle distribution. May act by inhibiting the formation of PYK10 complex by binding to GLL23 and exporting it from the ER. Required for proper subcellular localization of myrosinase TGG2. Has no lipase or esterase activity. This Arabidopsis thaliana (Mouse-ear cress) protein is Inactive GDSL esterase/lipase-like protein 25 (MVP1).